A 210-amino-acid polypeptide reads, in one-letter code: Large ribosomal subunit protein uL4 (210 aa).

Residues 46–96 form a disordered region; it reads QGNASTKTRAEVRGGGRKPWRQKGTGRARAGSNRSPLWRGGGVIFGPKPRD. Residues 60 to 71 show a composition bias toward basic residues; the sequence is GGRKPWRQKGTG.

The protein belongs to the universal ribosomal protein uL4 family. As to quaternary structure, part of the 50S ribosomal subunit.

One of the primary rRNA binding proteins, this protein initially binds near the 5'-end of the 23S rRNA. It is important during the early stages of 50S assembly. It makes multiple contacts with different domains of the 23S rRNA in the assembled 50S subunit and ribosome. In terms of biological role, forms part of the polypeptide exit tunnel. The polypeptide is Large ribosomal subunit protein uL4 (Gloeothece citriformis (strain PCC 7424) (Cyanothece sp. (strain PCC 7424))).